The sequence spans 1277 residues: Neural cell adhesion molecule L1 (1277 aa).

The signal sequence occupies residues 1–34 (MAHTQRQQGGSRGQWSRCLLLLLLLPLAAQPGRA). The Extracellular segment spans residues 35 to 1135 (AIQIPSSYYI…VQPSFATQGW (1101 aa)). Ig-like C2-type domains follow at residues 51–140 (PAIT…TAVS), 150–241 (PPVQ…EPIT), 256–344 (PQMM…YTVT), 349–437 (PYWT…TNVY), and 443–528 (PQIL…AEVE). Disulfide bonds link cysteine 72-cysteine 129, cysteine 173-cysteine 224, cysteine 280-cysteine 328, cysteine 370-cysteine 421, and cysteine 465-cysteine 514. The N-linked (GlcNAc...) asparagine glycan is linked to asparagine 317. Residues asparagine 503, asparagine 520, and asparagine 531 are each glycosylated (N-linked (GlcNAc...) asparagine). Positions 532–623 (RTVILSPPQA…DMVEASSTLT (92 aa)) constitute an Ig-like C2-type 6 domain. Cysteines 554 and 607 form a disulfide. Fibronectin type-III domains lie at 630-725 (PPVH…TPAD), 730-824 (NPED…SGED), 829-931 (APLN…TPEG), 935-1030 (PPMS…TLEG), and 1032-1129 (PPAN…VQPS). Positions 714 to 740 (SKLSDLYKTPADAPDSNPEDVRSESTD) are disordered. N-linked (GlcNAc...) asparagine glycans are attached at residues asparagine 794 and asparagine 839. 5 N-linked (GlcNAc...) asparagine glycosylation sites follow: asparagine 1035, asparagine 1046, asparagine 1068, asparagine 1083, and asparagine 1108. The helical transmembrane segment at 1136–1156 (FIGVVSAVVLLLLVLLILCFI) threads the bilayer. Residues 1157–1277 (KRSKGGKYSV…ATNGAPSFLN (121 aa)) are Cytoplasmic-facing. 2 disordered regions span residues 1163 to 1216 (KYSV…LCSE) and 1232 to 1277 (NMDE…SFLN). Basic and acidic residues predominate over residues 1165-1201 (SVKDKEDGPMDSEARPMKDETFGEYRSLESDLEEKRT). Residues 1232–1242 (NMDESLASQFS) are compositionally biased toward polar residues. A compositionally biased stretch (low complexity) spans 1255 to 1277 (PDNSPLNPAANPPATNGAPSFLN).

The protein belongs to the immunoglobulin superfamily. L1/neurofascin/NgCAM family.

The protein localises to the cell membrane. It localises to the cell projection. Its subcellular location is the growth cone. Its function is as follows. Neural cell adhesion molecule involved in the dynamics of cell adhesion and in the generation of transmembrane signals at tyrosine kinase receptors. During brain development, critical in multiple processes, including neuronal migration, axonal growth and fasciculation, and synaptogenesis. In the mature brain, plays a role in the dynamics of neuronal structure and function, including synaptic plasticity. The sequence is that of Neural cell adhesion molecule L1 (l1cam) from Takifugu rubripes (Japanese pufferfish).